The sequence spans 102 residues: Small ribosomal subunit protein uS10 (102 aa).

This sequence belongs to the universal ribosomal protein uS10 family. Part of the 30S ribosomal subunit.

Functionally, involved in the binding of tRNA to the ribosomes. In Lactobacillus helveticus (strain DPC 4571), this protein is Small ribosomal subunit protein uS10.